The primary structure comprises 237 residues: Concanavalin-A (237 aa).

The Mn(2+) site is built by Glu8 and Asp10. Ca(2+)-binding residues include Asp10, Tyr12, Asn14, and Asp19. Residue Asn14 coordinates a carbohydrate. Mn(2+) is bound by residues Asp19 and His24. A carbohydrate-binding positions include 98–100 (GLY), Asp208, and Arg228.

This sequence belongs to the leguminous lectin family. In terms of assembly, homotetramer. Post-translationally, concanavalin A-like lectins of the Diocleinae subtribe undergo proteolytic processing referred to as circular permutation. The propeptide is split into an N-terminal and a C-terminal part, the gamma and beta chain, respectively. These are then religated in beta-gamma order to form the mature alpha chain. The beta and gamma chains can often be detected in cell extracts. Residues 1-118 of the mature chain, as displayed here, probably constitute the beta chain in the propeptide, residues 119-237 the gamma chain.

Functionally, glucose/D-mannose specific lectin. This Canavalia cathartica (Jackbean) protein is Concanavalin-A.